Reading from the N-terminus, the 504-residue chain is ATP synthase subunit alpha, chloroplastic (504 aa).

170–177 is an ATP binding site; that stretch reads GDRQTGKT.

This sequence belongs to the ATPase alpha/beta chains family. In terms of assembly, F-type ATPases have 2 components, CF(1) - the catalytic core - and CF(0) - the membrane proton channel. CF(1) has five subunits: alpha(3), beta(3), gamma(1), delta(1), epsilon(1). CF(0) has four main subunits: a, b, b' and c.

The protein resides in the plastid. It is found in the chloroplast thylakoid membrane. It carries out the reaction ATP + H2O + 4 H(+)(in) = ADP + phosphate + 5 H(+)(out). Produces ATP from ADP in the presence of a proton gradient across the membrane. The alpha chain is a regulatory subunit. The sequence is that of ATP synthase subunit alpha, chloroplastic from Hordeum vulgare (Barley).